The chain runs to 405 residues: Cystathionine gamma-lyase (405 aa).

Substrate is bound by residues Arg-62, Tyr-114, and Arg-119. Lys-212 is subject to N6-(pyridoxal phosphate)lysine. Glu-339 is a substrate binding site.

The protein belongs to the trans-sulfuration enzymes family. Homotetramer. Interacts with CALM in a calcium-dependent manner. It depends on pyridoxal 5'-phosphate as a cofactor.

The protein resides in the cytoplasm. The enzyme catalyses L,L-cystathionine + H2O = 2-oxobutanoate + L-cysteine + NH4(+). It catalyses the reaction L-cysteine + H2O = hydrogen sulfide + pyruvate + NH4(+) + H(+). The catalysed reaction is L-homocysteine + H2O = 2-oxobutanoate + hydrogen sulfide + NH4(+) + H(+). It carries out the reaction L-homoserine = 2-oxobutanoate + NH4(+). The enzyme catalyses L-selenocystathionine + H2O = L-selenocysteine + 2-oxobutanoate + NH4(+). It functions in the pathway amino-acid biosynthesis; L-cysteine biosynthesis; L-cysteine from L-homocysteine and L-serine: step 2/2. In terms of biological role, catalyzes the last step in the trans-sulfuration pathway from L-methionine to L-cysteine in a pyridoxal-5'-phosphate (PLP)-dependent manner, which consists on cleaving the L,L-cystathionine molecule into L-cysteine, ammonia and 2-oxobutanoate. Part of the L-cysteine derived from the trans-sulfuration pathway is utilized for biosynthesis of the ubiquitous antioxidant glutathione. Besides its role in the conversion of L-cystathionine into L-cysteine, it utilizes L-cysteine and L-homocysteine as substrates (at much lower rates than L,L-cystathionine) to produce hydrogen sulfide (H2S). In vitro, it converts two L-cysteine molecules into lanthionine and H2S, and two L-homocysteine molecules to homolanthionine and H2S, which can be particularly relevant under conditions of severe hyperhomocysteinemia. Lanthionine and homolanthionine are structural homologs of L,L-cystathionine that differ by the absence or presence of an extra methylene group, respectively. Acts as a cysteine-protein sulfhydrase by mediating sulfhydration of target proteins: sulfhydration consists of converting -SH groups into -SSH on specific cysteine residues of target proteins such as GAPDH, PTPN1 and NF-kappa-B subunit RELA, thereby regulating their function. By generating the gasotransmitter H2S, it participates in a number of physiological processes such as vasodilation, bone protection, and inflammation. Plays an essential role in myogenesis by contributing to the biogenesis of H2S in skeletal muscle tissue. Can also accept homoserine as substrate. Catalyzes the elimination of selenocystathionine (which can be derived from the diet) to yield selenocysteine, ammonia and 2-oxobutanoate. This chain is Cystathionine gamma-lyase (CTH), found in Sus scrofa (Pig).